Reading from the N-terminus, the 398-residue chain is Phosphoglycerate kinase (398 aa).

Substrate-binding positions include 21 to 23 (DFN), Arg36, 59 to 62 (HLGR), Arg119, and Arg157. Residues Lys208, Gly296, Glu327, and 354–357 (GGDS) contribute to the ATP site.

Belongs to the phosphoglycerate kinase family. Monomer.

Its subcellular location is the cytoplasm. It carries out the reaction (2R)-3-phosphoglycerate + ATP = (2R)-3-phospho-glyceroyl phosphate + ADP. Its pathway is carbohydrate degradation; glycolysis; pyruvate from D-glyceraldehyde 3-phosphate: step 2/5. This Lactococcus lactis subsp. cremoris (strain MG1363) protein is Phosphoglycerate kinase.